Consider the following 291-residue polypeptide: 33 kDa chaperonin (291 aa).

2 cysteine pairs are disulfide-bonded: Cys-237–Cys-239 and Cys-270–Cys-273.

The protein belongs to the HSP33 family. Post-translationally, under oxidizing conditions two disulfide bonds are formed involving the reactive cysteines. Under reducing conditions zinc is bound to the reactive cysteines and the protein is inactive.

Its subcellular location is the cytoplasm. Its function is as follows. Redox regulated molecular chaperone. Protects both thermally unfolding and oxidatively damaged proteins from irreversible aggregation. Plays an important role in the bacterial defense system toward oxidative stress. In Halalkalibacterium halodurans (strain ATCC BAA-125 / DSM 18197 / FERM 7344 / JCM 9153 / C-125) (Bacillus halodurans), this protein is 33 kDa chaperonin.